We begin with the raw amino-acid sequence, 121 residues long: Glycine cleavage system H protein (121 aa).

One can recognise a Lipoyl-binding domain in the interval 16-98 (VATIGITAHA…EAGGWFAKVR (83 aa)). An N6-lipoyllysine modification is found at Lys57.

This sequence belongs to the GcvH family. In terms of assembly, the glycine cleavage system is composed of four proteins: P, T, L and H. (R)-lipoate is required as a cofactor.

Its function is as follows. The glycine cleavage system catalyzes the degradation of glycine. The H protein shuttles the methylamine group of glycine from the P protein to the T protein. The chain is Glycine cleavage system H protein from Phenylobacterium zucineum (strain HLK1).